Consider the following 390-residue polypeptide: 5-hydroxytryptamine receptor 1B (390 aa).

Residues 1–46 are Extracellular-facing; it reads MEEPGAQCAPPPPAGSETWVPQANLSSAPSQNCSAKDYIYQDSISL. Residues Asn24 and Asn32 are each glycosylated (N-linked (GlcNAc...) asparagine). Residues 47 to 72 traverse the membrane as a helical segment; it reads PWKVLLVMLLALITLATTLSNAFVIA. Residues 73–86 lie on the Cytoplasmic side of the membrane; the sequence is TVYRTRKLHTPANY. Residues 87–111 form a helical membrane-spanning segment; that stretch reads LIASLAVTDLLVSILVMPISTMYTV. Over 112 to 119 the chain is Extracellular; sequence TGRWTLGQ. The helical transmembrane segment at 120-145 threads the bilayer; sequence VVCDFWLSSDITCCTASILHLCVIAL. A disulfide bridge connects residues Cys122 and Cys199. 2 residues coordinate ergotamine: Asp129 and Thr134. The DRY motif; important for ligand-induced conformation changes and signaling signature appears at 146-148; sequence DRY. Topologically, residues 146–165 are cytoplasmic; that stretch reads DRYWAITDAVEYSAKRTPKR. Residues 166 to 184 form a helical membrane-spanning segment; the sequence is AAVMIALVWVFSISISLPP. Topologically, residues 185-205 are extracellular; sequence FFWRQAKAEEEVSECVVNTDH. Val201 serves as a coordination point for ergotamine. Residues 206–229 form a helical membrane-spanning segment; that stretch reads ILYTVYSTVGAFYFPTLLLIALYG. The Cytoplasmic portion of the chain corresponds to 230 to 315; that stretch reads RIYVEARSRI…AARERKATKT (86 aa). Over residues 259–272 the composition is skewed to polar residues; sequence DSPGSTSSVTSINS. The interval 259–281 is disordered; it reads DSPGSTSSVTSINSRVPDVPSES. The chain crosses the membrane as a helical span at residues 316-337; it reads LGIILGAFIVCWLPFFIISLVM. The Extracellular portion of the chain corresponds to 338–347; the sequence is PICKDACWFH. Residues 348 to 370 traverse the membrane as a helical segment; that stretch reads LAIFDFFTWLGYLNSLINPIIYT. Residues 365-369 carry the NPxxY motif; important for ligand-induced conformation changes and signaling motif; it reads NPIIY. The Cytoplasmic portion of the chain corresponds to 371–390; sequence MSNEDFKQAFHKLIRFKCTS. Cys388 carries S-palmitoyl cysteine lipidation.

This sequence belongs to the G-protein coupled receptor 1 family. As to quaternary structure, homodimer. Heterodimer with HTR1D. In terms of processing, phosphorylated. Desensitization of the receptor may be mediated by its phosphorylation. Post-translationally, palmitoylated. Detected in cerebral artery smooth muscle cells (at protein level). Detected in brain cortex, striatum, amygdala, medulla, hippocampus, caudate nucleus and putamen.

The protein resides in the cell membrane. In terms of biological role, G-protein coupled receptor for 5-hydroxytryptamine (serotonin). Also functions as a receptor for ergot alkaloid derivatives, various anxiolytic and antidepressant drugs and other psychoactive substances, such as lysergic acid diethylamide (LSD). Ligand binding causes a conformation change that triggers signaling via guanine nucleotide-binding proteins (G proteins) and modulates the activity of downstream effectors, such as adenylate cyclase. HTR1B is coupled to G(i)/G(o) G alpha proteins and mediates inhibitory neurotransmission by inhibiting adenylate cyclase activity. Arrestin family members inhibit signaling via G proteins and mediate activation of alternative signaling pathways. Regulates the release of 5-hydroxytryptamine, dopamine and acetylcholine in the brain, and thereby affects neural activity, nociceptive processing, pain perception, mood and behavior. Besides, plays a role in vasoconstriction of cerebral arteries. This chain is 5-hydroxytryptamine receptor 1B, found in Homo sapiens (Human).